Here is a 101-residue protein sequence, read N- to C-terminus: Small ribosomal subunit protein uS14 (101 aa).

It belongs to the universal ribosomal protein uS14 family. In terms of assembly, part of the 30S ribosomal subunit. Contacts proteins S3 and S10.

In terms of biological role, binds 16S rRNA, required for the assembly of 30S particles and may also be responsible for determining the conformation of the 16S rRNA at the A site. This Shewanella putrefaciens (strain CN-32 / ATCC BAA-453) protein is Small ribosomal subunit protein uS14.